A 202-amino-acid polypeptide reads, in one-letter code: Imidazoleglycerol-phosphate dehydratase (202 aa).

The protein belongs to the imidazoleglycerol-phosphate dehydratase family.

It localises to the cytoplasm. It catalyses the reaction D-erythro-1-(imidazol-4-yl)glycerol 3-phosphate = 3-(imidazol-4-yl)-2-oxopropyl phosphate + H2O. It functions in the pathway amino-acid biosynthesis; L-histidine biosynthesis; L-histidine from 5-phospho-alpha-D-ribose 1-diphosphate: step 6/9. The sequence is that of Imidazoleglycerol-phosphate dehydratase from Rhodopirellula baltica (strain DSM 10527 / NCIMB 13988 / SH1).